The following is a 379-amino-acid chain: Chaperone protein DnaJ (379 aa).

The J domain maps to 4–69 (DLYETLGVKK…QKRAAYDRYG (66 aa)). Residues 137–215 (GKTAQIRVPT…CHGQGRVTEE (79 aa)) form a CR-type zinc finger. Zn(2+) contacts are provided by C150, C153, C167, C170, C189, C192, C203, and C206. CXXCXGXG motif repeat units follow at residues 150 to 157 (CDVCTGSG), 167 to 174 (CATCQGSG), 189 to 196 (CPTCGGRG), and 203 to 210 (CTKCHGQG).

It belongs to the DnaJ family. As to quaternary structure, homodimer. The cofactor is Zn(2+).

The protein localises to the cytoplasm. In terms of biological role, participates actively in the response to hyperosmotic and heat shock by preventing the aggregation of stress-denatured proteins and by disaggregating proteins, also in an autonomous, DnaK-independent fashion. Unfolded proteins bind initially to DnaJ; upon interaction with the DnaJ-bound protein, DnaK hydrolyzes its bound ATP, resulting in the formation of a stable complex. GrpE releases ADP from DnaK; ATP binding to DnaK triggers the release of the substrate protein, thus completing the reaction cycle. Several rounds of ATP-dependent interactions between DnaJ, DnaK and GrpE are required for fully efficient folding. Also involved, together with DnaK and GrpE, in the DNA replication of plasmids through activation of initiation proteins. The chain is Chaperone protein DnaJ from Sinorhizobium fredii (strain NBRC 101917 / NGR234).